We begin with the raw amino-acid sequence, 202 residues long: MTAESTRKASIERSTKETSIAVSVDLDGVGKFDITTGVGFFDHMLEQLSRHSLIDMRVMAKGDLHIDDHHTVEDTGIALGQAIAKALGERRGIVRYASMDLAMDDTLTGAAVDVSGRAFLVWNVNFTTSKIGTFDTELVREFFQAFAMNAGITLHINNHYGANNHHIAESIFKAVARVLRTALETDPRQKDAIPSTKGSLKG.

It belongs to the imidazoleglycerol-phosphate dehydratase family.

The protein resides in the cytoplasm. It carries out the reaction D-erythro-1-(imidazol-4-yl)glycerol 3-phosphate = 3-(imidazol-4-yl)-2-oxopropyl phosphate + H2O. It participates in amino-acid biosynthesis; L-histidine biosynthesis; L-histidine from 5-phospho-alpha-D-ribose 1-diphosphate: step 6/9. The polypeptide is Imidazoleglycerol-phosphate dehydratase (Brucella anthropi (strain ATCC 49188 / DSM 6882 / CCUG 24695 / JCM 21032 / LMG 3331 / NBRC 15819 / NCTC 12168 / Alc 37) (Ochrobactrum anthropi)).